The primary structure comprises 365 residues: Myocyte-specific enhancer factor 2B (365 aa).

In terms of domain architecture, MADS-box spans 3–57 (RKKIQISRILDQRNRQVTFTKRKFGLMKKAYELSVLCDCEIALIIFNSANRLFQY). Positions 58–86 (ASTDMDRVLLKYTEYSEPHESRTNTDILE) form a DNA-binding region, mef2-type. Disordered regions lie at residues 94 to 124 (GLDG…GDPA), 142 to 309 (VVYG…SPGP), and 321 to 365 (AGCP…KTQQ). A compositionally biased stretch (acidic residues) spans 98 to 108 (PELEPDEGPEE). Residues 223–240 (NTSRSLYSGLQNPCSTAT) show a composition bias toward polar residues. 2 stretches are compositionally biased toward low complexity: residues 277 to 289 (PQSA…SLRP) and 326 to 346 (PTAG…SPGT). Residues 354 to 365 (TSLQASSEKTQQ) show a composition bias toward polar residues.

Belongs to the MEF2 family. As to quaternary structure, interacts with HDAC7. Heterodimer. Interacts with HDAC9. In terms of tissue distribution, expressed in skeletal and cardiac muscle and brain.

It localises to the nucleus. In terms of biological role, transcriptional activator which binds specifically to the MEF2 element, 5'-YTA[AT](4)TAR-3', found in numerous muscle-specific genes. Activates transcription via this element. May be involved in muscle-specific and/or growth factor-related transcription. The protein is Myocyte-specific enhancer factor 2B (MEF2B) of Homo sapiens (Human).